The primary structure comprises 323 residues: MRAATLYRYSIPMEAGVILRHQRLKSRDGLLVKLQQGEQTGWGEIAPLPEFSQETLPEAQAAAIAELQRWVNGEELDLGPLPSVAFGLSCALAELEKLLPLSADYHKAPLCTGDPDELFAVLQALPGEKVAKVKVGLYEAVRDGMIVNVLLEALPDLKLRLDANRSWTRAKADGFAKYVNPELRSRIAFLEEPCKTRAESREFARDTGIAIAWDESVREADFQVEAEPGVAAIVIKPTLVGSIARCQQLVQQAHQAGLEAVISSSIESSLGLTQLARLADWLTPATVPGLDTLSLMQAQCIRQWPDSTLPVVTVDQLDVLWHS.

Residue Lys134 is the Proton donor of the active site. Positions 162, 191, and 214 each coordinate Mg(2+). Lys236 serves as the catalytic Proton acceptor.

Belongs to the mandelate racemase/muconate lactonizing enzyme family. MenC type 1 subfamily. The cofactor is a divalent metal cation.

The catalysed reaction is (1R,6R)-6-hydroxy-2-succinyl-cyclohexa-2,4-diene-1-carboxylate = 2-succinylbenzoate + H2O. It participates in quinol/quinone metabolism; 1,4-dihydroxy-2-naphthoate biosynthesis; 1,4-dihydroxy-2-naphthoate from chorismate: step 4/7. It functions in the pathway quinol/quinone metabolism; menaquinone biosynthesis. In terms of biological role, converts 2-succinyl-6-hydroxy-2,4-cyclohexadiene-1-carboxylate (SHCHC) to 2-succinylbenzoate (OSB). This is o-succinylbenzoate synthase from Yersinia enterocolitica serotype O:8 / biotype 1B (strain NCTC 13174 / 8081).